The chain runs to 140 residues: Profilin-1 (140 aa).

At A2 the chain carries N-acetylalanine. The residue at position 28 (S28) is a Phosphoserine. Residue K54 forms a Glycyl lysine isopeptide (Lys-Gly) (interchain with G-Cter in SUMO2); alternate linkage. K54 is covalently cross-linked (Glycyl lysine isopeptide (Lys-Gly) (interchain with G-Cter in ubiquitin); alternate). S57 is modified (phosphoserine). Position 108 is an N6-acetyllysine (K108). Y129 is modified (phosphotyrosine). S138 carries the post-translational modification Phosphoserine; by ROCK1.

This sequence belongs to the profilin family. Found in a complex with XPO6, Ran, ACTB and PFN1. Interacts with ACTB. Interacts with VASP. Interacts with HTT. Interacts with SH3BGRL. Occurs in many kinds of cells as a complex with monomeric actin in a 1:1 ratio. Interacts with ACTMAP. Phosphorylation at Ser-138 reduces its affinity for G-actin and blocks its interaction with HTT, reducing its ability to inhibit androgen receptor (AR) and HTT aggregation.

The protein localises to the cytoplasm. Its subcellular location is the cytoskeleton. Its function is as follows. Binds to actin and affects the structure of the cytoskeleton. At high concentrations, profilin prevents the polymerization of actin, whereas it enhances it at low concentrations. By binding to PIP2, it inhibits the formation of IP3 and DG. Inhibits androgen receptor (AR) and HTT aggregation and binding of G-actin is essential for its inhibition of AR. The protein is Profilin-1 (PFN1) of Bos taurus (Bovine).